We begin with the raw amino-acid sequence, 141 residues long: Nucleoside diphosphate kinase (141 aa).

Positions 11, 59, 87, 93, 104, and 114 each coordinate ATP. The active-site Pros-phosphohistidine intermediate is the His-117.

This sequence belongs to the NDK family. In terms of assembly, homotetramer. Requires Mg(2+) as cofactor.

It localises to the cytoplasm. The enzyme catalyses a 2'-deoxyribonucleoside 5'-diphosphate + ATP = a 2'-deoxyribonucleoside 5'-triphosphate + ADP. The catalysed reaction is a ribonucleoside 5'-diphosphate + ATP = a ribonucleoside 5'-triphosphate + ADP. Its function is as follows. Major role in the synthesis of nucleoside triphosphates other than ATP. The ATP gamma phosphate is transferred to the NDP beta phosphate via a ping-pong mechanism, using a phosphorylated active-site intermediate. In Methylibium petroleiphilum (strain ATCC BAA-1232 / LMG 22953 / PM1), this protein is Nucleoside diphosphate kinase.